The sequence spans 698 residues: Protein CRAC (698 aa).

In terms of domain architecture, PH spans 22-122 (DVSYSSIMKK…FLTLLIARIR (101 aa)). Residues 594–630 (TGGGSVPSSQSTNNLQSSTSSMSSLSSSSTSTTKRSH) form a disordered region. Positions 601–626 (SSQSTNNLQSSTSSMSSLSSSSTSTT) are enriched in low complexity.

The protein resides in the cytoplasm. Functionally, couples activated G protein to adenylyl cyclase signal transduction from surface cAMP receptor. Pianissimo a cytosolic regulator and CRAC, are both essential for activation of the enzyme adenylyl cyclase. Pianissimo and CRAC do not function redundantly. Both proteins are integral components of the adenylyl cyclase activation pathway. This Dictyostelium discoideum (Social amoeba) protein is Protein CRAC (dagA).